Reading from the N-terminus, the 301-residue chain is Zinc finger protein 346 (301 aa).

Matrin-type zinc fingers lie at residues 55–85 and 117–141; these read SQCK…KVRR and KACS…GKVH. Positions 57, 60, 73, 79, 119, 122, 135, and 141 each coordinate Zn(2+). Residues 151-177 are disordered; that stretch reads GSQTPALPQPEAQAKKDDGMQGPAEQD. Matrin-type zinc fingers lie at residues 180–210 and 230–257; these read RFCS…HMNK and YPCT…HKNH. Positions 250 to 283 are disordered; sequence SGSKHKNHAKPKKGPNAFAPPPDNYQPDYQYPTN. Over residues 251-262 the composition is skewed to basic residues; the sequence is GSKHKNHAKPKK.

It localises to the nucleus. The protein resides in the cytoplasm. Functionally, binds preferentially to dsRNA, but also to RNA-DNA hybrids. In Danio rerio (Zebrafish), this protein is Zinc finger protein 346.